The following is a 358-amino-acid chain: Aromatic amino acid aminotransferase (358 aa).

Residue Lys222 is modified to N6-(pyridoxal phosphate)lysine.

This sequence belongs to the class-II pyridoxal-phosphate-dependent aminotransferase family. As to quaternary structure, homodimer. Pyridoxal 5'-phosphate is required as a cofactor.

The enzyme catalyses an aromatic L-alpha-amino acid + 2-oxoglutarate = an aromatic oxo-acid + L-glutamate. Its function is as follows. Aminotransferase that catalyzes the conversion of aromatic amino acids and 2-oxoglutarate into corresponding aromatic oxo acids and L-glutamate. The protein is Aromatic amino acid aminotransferase of Mycobacterium sp. (strain JLS).